A 179-amino-acid polypeptide reads, in one-letter code: MSFQDPQPLDLKNYIREIPDFPKRGILFYDISTLIRSPDAWQVATARLARVIAAWQPDILAGIESRGFLTAAPLALRLGCGFTMLRKPGKLPGKTISLKYGLEYGEDELHIQADAIKPGQRVVVLDDLLATGGTLAASIDLLRKVGAEVVGASVLIELADLKGREKLDVPLNALMTYDE.

It belongs to the purine/pyrimidine phosphoribosyltransferase family. As to quaternary structure, homodimer.

The protein localises to the cytoplasm. It carries out the reaction AMP + diphosphate = 5-phospho-alpha-D-ribose 1-diphosphate + adenine. It participates in purine metabolism; AMP biosynthesis via salvage pathway; AMP from adenine: step 1/1. Functionally, catalyzes a salvage reaction resulting in the formation of AMP, that is energically less costly than de novo synthesis. The polypeptide is Adenine phosphoribosyltransferase (Gluconobacter oxydans (strain 621H) (Gluconobacter suboxydans)).